Reading from the N-terminus, the 21-residue chain is Peptide PGLa-BM2 (21 aa).

An Alanine amide modification is found at alanine 21.

Expressed by the skin glands.

It is found in the secreted. Functionally, antimicrobial peptide. The protein is Peptide PGLa-BM2 of Xenopus boumbaensis (Mawa clawed frog).